The following is a 342-amino-acid chain: Holliday junction branch migration complex subunit RuvB (342 aa).

The interval 1 to 185 is large ATPase domain (RuvB-L); that stretch reads MRKDYLNSNK…FGINTRLAYY (185 aa). Residues Leu-24, Arg-25, Gly-66, Lys-69, Thr-70, Thr-71, 132–134, Arg-175, Tyr-185, and Arg-222 contribute to the ATP site; that span reads EDF. Mg(2+) is bound at residue Thr-70. The segment at 186 to 256 is small ATPAse domain (RuvB-S); it reads DVTLLTQIVK…IAQMALKALD (71 aa). Residues 259-342 form a head domain (RuvB-H) region; it reads EDGLDEMDNR…PPQRAGTLFE (84 aa). The DNA site is built by Arg-314 and Arg-319.

It belongs to the RuvB family. Homohexamer. Forms an RuvA(8)-RuvB(12)-Holliday junction (HJ) complex. HJ DNA is sandwiched between 2 RuvA tetramers; dsDNA enters through RuvA and exits via RuvB. An RuvB hexamer assembles on each DNA strand where it exits the tetramer. Each RuvB hexamer is contacted by two RuvA subunits (via domain III) on 2 adjacent RuvB subunits; this complex drives branch migration. In the full resolvosome a probable DNA-RuvA(4)-RuvB(12)-RuvC(2) complex forms which resolves the HJ.

The protein resides in the cytoplasm. The catalysed reaction is ATP + H2O = ADP + phosphate + H(+). Functionally, the RuvA-RuvB-RuvC complex processes Holliday junction (HJ) DNA during genetic recombination and DNA repair, while the RuvA-RuvB complex plays an important role in the rescue of blocked DNA replication forks via replication fork reversal (RFR). RuvA specifically binds to HJ cruciform DNA, conferring on it an open structure. The RuvB hexamer acts as an ATP-dependent pump, pulling dsDNA into and through the RuvAB complex. RuvB forms 2 homohexamers on either side of HJ DNA bound by 1 or 2 RuvA tetramers; 4 subunits per hexamer contact DNA at a time. Coordinated motions by a converter formed by DNA-disengaged RuvB subunits stimulates ATP hydrolysis and nucleotide exchange. Immobilization of the converter enables RuvB to convert the ATP-contained energy into a lever motion, pulling 2 nucleotides of DNA out of the RuvA tetramer per ATP hydrolyzed, thus driving DNA branch migration. The RuvB motors rotate together with the DNA substrate, which together with the progressing nucleotide cycle form the mechanistic basis for DNA recombination by continuous HJ branch migration. Branch migration allows RuvC to scan DNA until it finds its consensus sequence, where it cleaves and resolves cruciform DNA. The protein is Holliday junction branch migration complex subunit RuvB of Amoebophilus asiaticus (strain 5a2).